Here is a 324-residue protein sequence, read N- to C-terminus: Sex-lethal homolog (324 aa).

RRM domains follow at residues 102-180 (TNLI…YARP) and 188-268 (TNLY…LAEE).

In terms of tissue distribution, expressed in somatic cells of both sexes throughout development, but not in the pole cells which are the progenitors of the germline.

The protein resides in the nucleus. In terms of biological role, unknown; apparently not involved in somatic sex determination. The polypeptide is Sex-lethal homolog (SXL) (Musca domestica (House fly)).